The primary structure comprises 454 residues: Bifunctional protein GlmU (454 aa).

Residues 1–226 are pyrophosphorylase; it reads MSLEIVILAA…AMEVQGVNDR (226 aa). Residues 8–11, Lys22, Gln73, 78–79, 99–101, Gly136, Glu151, Asn166, and Asn224 contribute to the UDP-N-acetyl-alpha-D-glucosamine site; these read LAAG, GT, and YGD. Asp101 provides a ligand contact to Mg(2+). Asn224 contacts Mg(2+). The interval 227–247 is linker; that stretch reads MQQAQLERHYQRLRAEELMRQ. The segment at 248 to 454 is N-acetyltransferase; that stretch reads GVTLLDPQRL…NWKRPEKIKK (207 aa). UDP-N-acetyl-alpha-D-glucosamine contacts are provided by Arg330 and Lys348. His360 functions as the Proton acceptor in the catalytic mechanism. The UDP-N-acetyl-alpha-D-glucosamine site is built by Tyr363 and Asn374. Acetyl-CoA contacts are provided by residues Ala377, 383 to 384, Ser402, Ala420, and Arg437; that span reads NY.

The protein in the N-terminal section; belongs to the N-acetylglucosamine-1-phosphate uridyltransferase family. In the C-terminal section; belongs to the transferase hexapeptide repeat family. In terms of assembly, homotrimer. The cofactor is Mg(2+).

It localises to the cytoplasm. It carries out the reaction alpha-D-glucosamine 1-phosphate + acetyl-CoA = N-acetyl-alpha-D-glucosamine 1-phosphate + CoA + H(+). The catalysed reaction is N-acetyl-alpha-D-glucosamine 1-phosphate + UTP + H(+) = UDP-N-acetyl-alpha-D-glucosamine + diphosphate. It participates in nucleotide-sugar biosynthesis; UDP-N-acetyl-alpha-D-glucosamine biosynthesis; N-acetyl-alpha-D-glucosamine 1-phosphate from alpha-D-glucosamine 6-phosphate (route II): step 2/2. Its pathway is nucleotide-sugar biosynthesis; UDP-N-acetyl-alpha-D-glucosamine biosynthesis; UDP-N-acetyl-alpha-D-glucosamine from N-acetyl-alpha-D-glucosamine 1-phosphate: step 1/1. It functions in the pathway bacterial outer membrane biogenesis; LPS lipid A biosynthesis. Its function is as follows. Catalyzes the last two sequential reactions in the de novo biosynthetic pathway for UDP-N-acetylglucosamine (UDP-GlcNAc). The C-terminal domain catalyzes the transfer of acetyl group from acetyl coenzyme A to glucosamine-1-phosphate (GlcN-1-P) to produce N-acetylglucosamine-1-phosphate (GlcNAc-1-P), which is converted into UDP-GlcNAc by the transfer of uridine 5-monophosphate (from uridine 5-triphosphate), a reaction catalyzed by the N-terminal domain. This Pseudomonas aeruginosa (strain LESB58) protein is Bifunctional protein GlmU.